The sequence spans 1025 residues: Rho GTPase-activating protein Graf (1025 aa).

Residues Ile271–Pro388 form the PH domain. One can recognise a Rho-GAP domain in the interval Tyr402–Phe589. The disordered stretch occupies residues Gly824–Ser866. Over residues Thr854 to Ser866 the composition is skewed to low complexity. Residues Thr963–Pro1023 enclose the SH3 domain.

As to quaternary structure, interacts with Egfr (when ubiquitinated). In the adult brain, expressed in the antennal lobe, the subesophageal ganglion and the alpha/beta neurons of the mushroom body.

The protein resides in the cytoplasm. It is found in the cytosol. The protein localises to the cytoplasmic vesicle. Its function is as follows. GTPase-activating protein for Rho family proteins. Essential component of the CLIC (clathrin-independent carrier)/GEEC (GPI-anchored protein-enriched early endocytic compartment) endocytic pathway. During hematopoiesis, inhibits Egfr-ras-MAPK signaling by promoting Spi-induced Egfr internalization through CLIC/GEEC endocytosis, thereby preventing plasmatocyte overproliferation. Essential for normal mushroom body (MB) development and consequently the formation of olfactory long-term memories. During MD development, required to stop the MB beta-lobe from crossing the brain midline, possibly acting via its role in the CLIC/GEEC endocytic pathway to down-regulate the Egfr-ras-MAPK signaling at the tip of the beta-lobes. Required during embryo cellularization for maintaining and regulating the rate of actomyosin ring constriction. During cellularization, inhibits Rho-GTP levels at the furrow canal tip in a spatiotemporal manner, thus delaying the onset of actomyosin contraction and ensuring appropriate closure of the cells at the base of nuclei after membrane extension. In Drosophila melanogaster (Fruit fly), this protein is Rho GTPase-activating protein Graf.